The sequence spans 152 residues: MFRGATLVNLDSKGRLAVPTRYREMLYGESQGQMVCTIDLHQPCLLLYPLPEWEIIEQKLSRLSSMNPAERRVQRLLLGHASECQMDSAGRLLIANTLRQHADLKKEVMLVGQFNKFELWDEQTWYQQVKDDIDAEQSTQEPLSERLQDLSL.

SpoVT-AbrB domains are found at residues 5-52 (ATLV…PLPE) and 81-124 (ASEC…DEQT).

This sequence belongs to the MraZ family. Forms oligomers.

Its subcellular location is the cytoplasm. The protein localises to the nucleoid. Negatively regulates its own expression and that of the subsequent genes in the proximal part of the division and cell wall (dcw) gene cluster. Acts by binding directly to DNA. May also regulate the expression of genes outside the dcw cluster. The polypeptide is Transcriptional regulator MraZ (Pectobacterium atrosepticum (strain SCRI 1043 / ATCC BAA-672) (Erwinia carotovora subsp. atroseptica)).